A 340-amino-acid chain; its full sequence is Heat-inducible transcription repressor HrcA (340 aa).

This sequence belongs to the HrcA family.

In terms of biological role, negative regulator of class I heat shock genes (grpE-dnaK-dnaJ and groELS operons). Prevents heat-shock induction of these operons. The chain is Heat-inducible transcription repressor HrcA from Burkholderia cenocepacia (strain HI2424).